The primary structure comprises 391 residues: Ribonuclease 3-like protein 2 (391 aa).

Positions 7 to 26 (PEYNFPAITRCSLSNSLPHR) match the Nuclear export signal motif. Residues 60–203 (MEAVEKILNY…LAGAVYVDVN (144 aa)) enclose the RNase III domain. The Mg(2+) site is built by Glu-96, Asp-189, and Glu-192. DRBM domains follow at residues 218–294 (EPIV…KLSE) and 313–387 (HAKT…ALRK). Cysteines 240 and 322 form a disulfide. Residues 371 to 387 (KKAESSSAYHMIRALRK) carry the Bipartite nuclear localization motif.

In terms of assembly, homodimer; disulfide-linked. Mg(2+) serves as cofactor. The cofactor is Mn(2+). Expressed in seeds, leaves and flower buds.

The protein resides in the nucleus. It localises to the cytoplasm. Functionally, ribonuclease that cleaves double-stranded RNA (dsRNA). Required for 3'-external transcribed spacer (ETS) cleavage of the pre-rRNA precursors. May promote the production of 21 nucleotide small interfering RNA (siRNA) during post-transcriptional gene silencing (PTGS). This chain is Ribonuclease 3-like protein 2 (RTL2), found in Arabidopsis thaliana (Mouse-ear cress).